Reading from the N-terminus, the 335-residue chain is Heme A synthase (335 aa).

The next 8 helical transmembrane spans lie at 9–29 (VAIW…IGGF), 90–110 (YVHR…FIYF), 120–140 (VVIR…TGWY), 156–176 (MLTL…YQFF), 197–217 (VGII…VAGL), 255–275 (VQFI…VLTI), 283–303 (VYVM…TLLL), and 309–329 (IAIS…CFLC). His259 is a heme binding site. His313 is a binding site for heme.

This sequence belongs to the COX15/CtaA family. Type 2 subfamily. As to quaternary structure, interacts with CtaB. Heme b serves as cofactor.

Its subcellular location is the cell membrane. It carries out the reaction Fe(II)-heme o + 2 A + H2O = Fe(II)-heme a + 2 AH2. It functions in the pathway porphyrin-containing compound metabolism; heme A biosynthesis; heme A from heme O: step 1/1. Catalyzes the conversion of heme O to heme A by two successive hydroxylations of the methyl group at C8. The first hydroxylation forms heme I, the second hydroxylation results in an unstable dihydroxymethyl group, which spontaneously dehydrates, resulting in the formyl group of heme A. The polypeptide is Heme A synthase (Wolbachia sp. subsp. Brugia malayi (strain TRS)).